Here is a 229-residue protein sequence, read N- to C-terminus: Putative N-acetylmannosamine-6-phosphate 2-epimerase (229 aa).

It belongs to the NanE family.

The catalysed reaction is an N-acyl-D-glucosamine 6-phosphate = an N-acyl-D-mannosamine 6-phosphate. Its pathway is amino-sugar metabolism; N-acetylneuraminate degradation; D-fructose 6-phosphate from N-acetylneuraminate: step 3/5. Converts N-acetylmannosamine-6-phosphate (ManNAc-6-P) to N-acetylglucosamine-6-phosphate (GlcNAc-6-P). In Salmonella agona (strain SL483), this protein is Putative N-acetylmannosamine-6-phosphate 2-epimerase.